The primary structure comprises 247 residues: Mast cell protease 8 (247 aa).

A signal peptide spans 1 to 19 (MFLLLVLLVAALPVNAEGG). Position 20 (Glu20) is a propeptide, activation peptide. A Peptidase S1 domain is found at 21–242 (IIWGTESKPH…FMPWIRKTMK (222 aa)). Asn41 carries N-linked (GlcNAc...) asparagine glycosylation. A disulfide bridge connects residues Cys49 and Cys65. Catalysis depends on His64, which acts as the Charge relay system. Asn71 and Asn101 each carry an N-linked (GlcNAc...) asparagine glycan. The active-site Charge relay system is Asp107. 2 disulfide bridges follow: Cys141-Cys206 and Cys171-Cys185. N-linked (GlcNAc...) asparagine glycosylation is found at Asn151 and Asn179. Ser200 serves as the catalytic Charge relay system.

This sequence belongs to the peptidase S1 family. Granzyme subfamily.

The protein resides in the secreted. The protein localises to the cytoplasmic granule. This Mus musculus (Mouse) protein is Mast cell protease 8 (Mcpt8).